Consider the following 150-residue polypeptide: MSDWDSVTIIGQKARIGGGGPRQNVAKTQAELNAARRSGNVVGTEKKYGSTNTKSNPEGQRLTKLDAVDDVVPTKKLDMNVGKAIQQARQEKKLTQKDLATKINEKPNVINDYEAGRAVPNQQLLGKLERALGVKLRGKNIGEPLFAKKK.

Residues 32–59 (LNAARRSGNVVGTEKKYGSTNTKSNPEG) are disordered. Residues 49–58 (GSTNTKSNPE) show a composition bias toward polar residues. The 55-residue stretch at 85–139 (IQQARQEKKLTQKDLATKINEKPNVINDYEAGRAVPNQQLLGKLERALGVKLRGK) folds into the HTH cro/C1-type domain. The H-T-H motif DNA-binding region spans 96 to 115 (QKDLATKINEKPNVINDYEA).

Belongs to the MBF1 family.

Its function is as follows. Transcriptional coactivator that stimulates GCN4-dependent transcriptional activity by bridging the DNA-binding region of GCN4 and TBP (SPT15), thereby recruiting TBP to GCN4-bound promoters. Involved in induction of the ribosome quality control (RQC) pathway; a pathway that degrades nascent peptide chains during problematic translation. Required to prevent stalled ribosomes from frameshifting. In Debaryomyces hansenii (strain ATCC 36239 / CBS 767 / BCRC 21394 / JCM 1990 / NBRC 0083 / IGC 2968) (Yeast), this protein is Multiprotein-bridging factor 1 (MBF1).